The sequence spans 590 residues: Aspartate--tRNA(Asp/Asn) ligase (590 aa).

Glu-175 provides a ligand contact to L-aspartate. The tract at residues 199–202 is aspartate; that stretch reads QQYK. Positions 221 and 450 each coordinate L-aspartate. 221–223 lines the ATP pocket; sequence RDE. Residue Glu-484 coordinates ATP. Arg-491 contributes to the L-aspartate binding site. ATP is bound at residue 536–539; that stretch reads GVDR.

The protein belongs to the class-II aminoacyl-tRNA synthetase family. Type 1 subfamily. Homodimer.

The protein localises to the cytoplasm. It catalyses the reaction tRNA(Asx) + L-aspartate + ATP = L-aspartyl-tRNA(Asx) + AMP + diphosphate. In terms of biological role, aspartyl-tRNA synthetase with relaxed tRNA specificity since it is able to aspartylate not only its cognate tRNA(Asp) but also tRNA(Asn). Reaction proceeds in two steps: L-aspartate is first activated by ATP to form Asp-AMP and then transferred to the acceptor end of tRNA(Asp/Asn). This is Aspartate--tRNA(Asp/Asn) ligase from Nitrobacter winogradskyi (strain ATCC 25391 / DSM 10237 / CIP 104748 / NCIMB 11846 / Nb-255).